Reading from the N-terminus, the 710-residue chain is Amyloid beta precursor protein binding family B member 1 (710 aa).

Residues 1-15 are compositionally biased toward polar residues; that stretch reads MSVPSSLSQSAINAN. Disordered stretches follow at residues 1 to 24, 131 to 254, 276 to 299, and 340 to 365; these read MSVP…ALSL, GLRG…TDSD, GTTQ…EESQ, and TFPA…NTNP. Positions 145-173 are enriched in acidic residues; the sequence is GPDEGEEKAAGEAEEEEEDDDDEEEEEDL. An N6-acetyllysine modification is found at lysine 204. Polar residues predominate over residues 223–234; it reads SWATLSQGSPSY. The region spanning 253–285 is the WW domain; it reads SDLPAGWMRVQDTSGTYYWHIPTGTTQWEPPGR. Over residues 287-299 the composition is skewed to low complexity; the sequence is SPSQGSSPQEESQ. The 140-residue stretch at 370–509 folds into the PID 1 domain; that stretch reads FAVRSLGWVE…SKIMAERRNA (140 aa). Serine 459 carries the post-translational modification Phosphoserine; by PKC. Position 517 is a phosphoserine (serine 517). The region spanning 542–699 is the PID 2 domain; the sequence is KFQVYYLGNV…RRGVQSLWGS (158 aa). Residue tyrosine 547 is modified to Phosphotyrosine; by ABL1. Serine 610 carries the phosphoserine; by SGK1 modification. Lysine 701 carries the N6-acetyllysine modification.

As to quaternary structure, component of a complex, at least composed of APBB1, RASD1/DEXRAS1 and APP. Interacts (via PID domain 2) with APP (with the intracellular domain of the amyloid-beta precursor protein). Interacts (via PID domain 2) with RASD1/DEXRAS1; impairs the transcription activation activity. Interacts (via PID domain 1) with KAT5/TIP60. Interacts (via the WW domain) with the proline-rich region of APBB1IP. Interacts with TSHZ1 and TSHZ2. Interacts (via the WW domain) with histone H2AX (when phosphorylated on 'Tyr-142') and the proline-rich region of ENAH. Interacts with MAPK8. Interacts (via PID domain 1) with TSHZ3 (via homeobox domain). Interacts with SET. Found in a trimeric complex with HDAC1 and TSHZ3; the interaction between HDAC1 and APBB1 is mediated by TSHZ3. Interacts (via WWW domain) with NEK6. Interacts (via WWW domain) with ABL1. Interacts with RNF157. Interacts with ARF6. Phosphorylation at Ser-610 by SGK1 promotes its localization to the nucleus. Phosphorylated following nuclear translocation. Phosphorylation at Tyr-547 by ABL1 enhances transcriptional activation activity and reduces the affinity for RASD1/DEXRAS1. Phosphorylated at Ser-459 by PKC upon insulin activation. In terms of processing, acetylation at Lys-204 and Lys-701 by KAT5 promotes its transcription activator activity. Post-translationally, polyubiquitination by RNF157 leads to degradation by the proteasome. Highly expressed in brain; strongly reduced in post-mortem elderly subjects with Alzheimer disease. In terms of tissue distribution, expressed preferentially in the brain.

It localises to the cell membrane. The protein localises to the cytoplasm. It is found in the nucleus. The protein resides in the cell projection. Its subcellular location is the growth cone. It localises to the nucleus speckle. Functionally, transcription coregulator that can have both coactivator and corepressor functions. Adapter protein that forms a transcriptionally active complex with the gamma-secretase-derived amyloid precursor protein (APP) intracellular domain. Plays a central role in the response to DNA damage by translocating to the nucleus and inducing apoptosis. May act by specifically recognizing and binding histone H2AX phosphorylated on 'Tyr-142' (H2AXY142ph) at double-strand breaks (DSBs), recruiting other pro-apoptosis factors such as MAPK8/JNK1. Required for histone H4 acetylation at double-strand breaks (DSBs). Its ability to specifically bind modified histones and chromatin modifying enzymes such as KAT5/TIP60, probably explains its transcription activation activity. Functions in association with TSHZ3, SET and HDAC factors as a transcriptional repressor, that inhibits the expression of CASP4. Associates with chromatin in a region surrounding the CASP4 transcriptional start site(s). Involved in hippocampal neurite branching and neuromuscular junction formation, as a result plays a role in spatial memory functioning. Plays a role in the maintenance of lens transparency. May play a role in muscle cell strength. Acts as a molecular adapter that functions in neurite outgrowth by activating the RAC1-ARF6 axis upon insulin treatment. This chain is Amyloid beta precursor protein binding family B member 1, found in Homo sapiens (Human).